The chain runs to 1293 residues: MSGPLEGADGGGDPRPGEPFCPGGVPSPGAPQHRPCPGPSLADDTDANSNGSSGNESNGHESRGASQRSSHSSSSGNGKDSALLETTESSKSTNSQSPSPPSSSIAYSLLSASSEQDNPSTSGCSSEQSARARTQKELMTALRELKLRLPPERRGKGRSGTLATLQYALACVKQVQANQEYYQQWSLEEGEPCAMDMSTYTLEELEHITSEYTLRNQDTFSVAVSFLTGRIVYISEQAGVLLRCKRDVFRGARFSELLAPQDVGVFYGSTTPSRLPTWGTGTSAGSGLKDFTQEKSVFCRIRGGPDRDPGPRYQPFRLTPYVTKIRVSDGAPAQPCCLLIAERIHSGYEAPRIPPDKRIFTTRHTPSCLFQDVDERAAPLLGYLPQDLLGAPVLLFLHPEDRPLMLAIHKKILQLAGQPFDHSPIRFCARNGEYVTMDTSWAGFVHPWSRKVAFVLGRHKVRTAPLNEDVFTPPVPSPAPSLDSDIQELSEQIHRLLLQPVHSSSTTGLCGVGPLMSPGPLHSPGSSSDSNGGDAEGPGPPAPVTFQQICKDVHLVKHQGQQLFIESRAKPPPRPRLLATGTFKAKVLPCQSPNPELEVAPAPDQASLALAPEEPERKESSGCSYQQINCLDSILRYLESCNIPNTTKRKCASSSCTASSASDDDKQRAGPVPVGAKKDTSSAVLSGEGATPRKEPVVGGTLSPLALANKAESVVSVTSQCSFSSTIVHVGDKKPPESDIIMMEDLPGLAPGPAPSPAPSPTVAPDPAPDAYRPVGLTKAVLSLHTQKEEQAFLSRFRDLGRLRGLDTSSVAPSAPGCHHGPIPSGRRHHCRSKAKRSRHHQTPRPETPCYVSHPSPVPSSGPWPPPPATTPFPAVVQPYPLPVFSPRGGPQPLPPAPTSVSPATFPSPLVTPMVALVLPNYLFPSPTSYPYGVSQAPVEGPPTPASHSPSPSLPPPPPSPPHRPDSPLFNSRCSSPLQLNLLQLEESPRTEGGAAAGGPGSSAGPLPPSEESAEPEPRLVEVTESSNQDALSGSSDLLELLLQEDSRSGTGSAASGSLGSGLGSGSGSGSHEGGSTSASITRSSQSSHTSKYFGSIDSSEAEAGAAQARTEPGDQVIKYVLQDPIWLLMANADQHVMMTYQVPSRDAASVLKQDRERLRAMQKQQPRFSEDQRRELGAVHSWVRKGQLPQALDVTACVDCGSSVQDPGHSDDPLFSELDGLGLEPMEEGGGEGGGVGGGGGGVGGGGGDGGEEAQTQIGTKGSSSQDSAMEEEEQGGSSSSPALPAEENGTS.

The disordered stretch occupies residues 1 to 134 (MSGPLEGADG…SSEQSARART (134 aa)). Residues 1-151 (MSGPLEGADG…LRELKLRLPP (151 aa)) are interaction with BTRC. 2 stretches are compositionally biased toward low complexity: residues 48–57 (NSNGSSGNES) and 64–115 (GASQ…ASSE). The segment covering 116-132 (QDNPSTSGCSSEQSARA) has biased composition (polar residues). Thr-121 is subject to Phosphothreonine; by CSNK1E. Residues Ser-122 and Ser-126 each carry the phosphoserine; by CSNK1E modification. The Nuclear export signal 1 signature appears at 138 to 147 (LMTALRELKL). PAS domains are found at residues 208–275 (ITSE…PSRL) and 348–414 (YEAP…KILQ). Positions 422 to 465 (HSPIRFCARNGEYVTMDTSWAGFVHPWSRKVAFVLGRHKVRTAP) constitute a PAC domain. A Nuclear export signal 2 motif is present at residues 489 to 498 (LSEQIHRLLL). 2 disordered regions span residues 509 to 544 (LCGVGPLMSPGPLHSPGSSSDSNGGDAEGPGPPAPV) and 647 to 697 (TKRK…KEPV). Low complexity-rich tracts occupy residues 513-533 (GPLMSPGPLHSPGSSSDSNGG) and 652-661 (ASSSCTASSA). Positions 596 to 814 (ELEVAPAPDQ…GLDTSSVAPS (219 aa)) are required for phosphorylation by CSNK1E. Ser-660, Ser-662, and Ser-703 each carry phosphoserine. Disordered stretches follow at residues 748-771 (GLAPGPAPSPAPSPTVAPDPAPDA), 808-870 (TSSV…PPAT), 935-1094 (SQAP…SKYF), and 1204-1293 (SVQD…NGTS). The span at 750–768 (APGPAPSPAPSPTVAPDPA) shows a compositional bias: pro residues. The residue at position 814 (Ser-814) is a Phosphoserine. Positions 823-839 (IPSGRRHHCRSKAKRSR) match the Nuclear localization signal motif. The segment covering 826 to 843 (GRRHHCRSKAKRSRHHQT) has biased composition (basic residues). 2 stretches are compositionally biased toward pro residues: residues 856–870 (SPVPSSGPWPPPPAT) and 952–962 (PSLPPPPPSPP). A compositionally biased stretch (polar residues) spans 969-982 (LFNSRCSSPLQLNL). Residues Ser-975 and Ser-976 each carry the phosphoserine modification. Positions 978–985 (LQLNLLQL) match the Nuclear export signal 3 motif. Residues 1032 to 1058 (LSGSSDLLELLLQEDSRSGTGSAASGS) are compositionally biased toward low complexity. An LXXLL motif is present at residues 1039-1043 (LELLL). The span at 1059–1073 (LGSGLGSGSGSGSHE) shows a compositional bias: gly residues. Low complexity predominate over residues 1074–1091 (GGSTSASITRSSQSSHTS). The CRY binding domain stretch occupies residues 1145–1293 (SRDAASVLKQ…ALPAEENGTS (149 aa)). Residues 1232–1250 (GEGGGVGGGGGGVGGGGGD) show a composition bias toward gly residues. Residues 1255 to 1269 (AQTQIGTKGSSSQDS) show a composition bias toward polar residues.

Homodimer. Component of the circadian core oscillator, which includes the CRY proteins, CLOCK or NPAS2, BMAL1 or BMAL2, CSNK1D and/or CSNK1E, TIMELESS, and the PER proteins. Interacts directly with TIMELESS, PER2, PER3, CRY1 and CRY2. Interacts with BMAL1 and CLOCK. Interacts with GPRASP1. Interacts (phosphorylated) with BTRC and FBXW11; the interactions trigger proteasomal degradation. Interacts with NONO and WDR5. Interacts with SFPQ. Interacts with USP2. Interacts with HNF4A. In terms of processing, phosphorylated on serine residues by CSNK1D, CSNK1E and probably also by CSNK1G2. Phosphorylation by CSNK1D or CSNK1E promotes nuclear location of PER proteins as well as ubiquitination and subsequent degradation. May be dephosphorylated by PP1. Post-translationally, ubiquitinated; requires phosphorylation by CSNK1E and interaction with BTRC and FBXW11. Deubiquitinated by USP2. Expressed in pancreas. In the CNS, highly expressed in the SCN, internal granular layer of granular cells of the olfactory bulb, tuberculum olfactorium, piriform cortex, gyrus dentatus of the hippocampus, cerebellum, pars tuberalis/median eminence, and pituitary, and moderately in the tenia tecta, caudate putamen, accumbens nucleus, spinal cord, superior and inferior colliculus and pineal gland.

It is found in the nucleus. It localises to the cytoplasm. Functionally, transcriptional repressor which forms a core component of the circadian clock. The circadian clock, an internal time-keeping system, regulates various physiological processes through the generation of approximately 24 hour circadian rhythms in gene expression, which are translated into rhythms in metabolism and behavior. It is derived from the Latin roots 'circa' (about) and 'diem' (day) and acts as an important regulator of a wide array of physiological functions including metabolism, sleep, body temperature, blood pressure, endocrine, immune, cardiovascular, and renal function. Consists of two major components: the central clock, residing in the suprachiasmatic nucleus (SCN) of the brain, and the peripheral clocks that are present in nearly every tissue and organ system. Both the central and peripheral clocks can be reset by environmental cues, also known as Zeitgebers (German for 'timegivers'). The predominant Zeitgeber for the central clock is light, which is sensed by retina and signals directly to the SCN. The central clock entrains the peripheral clocks through neuronal and hormonal signals, body temperature and feeding-related cues, aligning all clocks with the external light/dark cycle. Circadian rhythms allow an organism to achieve temporal homeostasis with its environment at the molecular level by regulating gene expression to create a peak of protein expression once every 24 hours to control when a particular physiological process is most active with respect to the solar day. Transcription and translation of core clock components (CLOCK, NPAS2, BMAL1, BMAL2, PER1, PER2, PER3, CRY1 and CRY2) plays a critical role in rhythm generation, whereas delays imposed by post-translational modifications (PTMs) are important for determining the period (tau) of the rhythms (tau refers to the period of a rhythm and is the length, in time, of one complete cycle). A diurnal rhythm is synchronized with the day/night cycle, while the ultradian and infradian rhythms have a period shorter and longer than 24 hours, respectively. Disruptions in the circadian rhythms contribute to the pathology of cardiovascular diseases, cancer, metabolic syndromes and aging. A transcription/translation feedback loop (TTFL) forms the core of the molecular circadian clock mechanism. Transcription factors, CLOCK or NPAS2 and BMAL1 or BMAL2, form the positive limb of the feedback loop, act in the form of a heterodimer and activate the transcription of core clock genes and clock-controlled genes (involved in key metabolic processes), harboring E-box elements (5'-CACGTG-3') within their promoters. The core clock genes: PER1/2/3 and CRY1/2 which are transcriptional repressors form the negative limb of the feedback loop and interact with the CLOCK|NPAS2-BMAL1|BMAL2 heterodimer inhibiting its activity and thereby negatively regulating their own expression. This heterodimer also activates nuclear receptors NR1D1/2 and RORA/B/G, which form a second feedback loop and which activate and repress BMAL1 transcription, respectively. Regulates circadian target genes expression at post-transcriptional levels, but may not be required for the repression at transcriptional level. Controls PER2 protein decay. Represses CRY2 preventing its repression on CLOCK/BMAL1 target genes such as FXYD5 and SCNN1A in kidney and PPARA in liver. Besides its involvement in the maintenance of the circadian clock, has an important function in the regulation of several processes. Participates in the repression of glucocorticoid receptor NR3C1/GR-induced transcriptional activity by reducing the association of NR3C1/GR to glucocorticoid response elements (GREs) by BMAL1:CLOCK. Plays a role in the modulation of the neuroinflammatory state via the regulation of inflammatory mediators release, such as CCL2 and IL6. In spinal astrocytes, negatively regulates the MAPK14/p38 and MAPK8/JNK MAPK cascades as well as the subsequent activation of NFkappaB. Coordinately regulates the expression of multiple genes that are involved in the regulation of renal sodium reabsorption. Can act as gene expression activator in a gene and tissue specific manner, in kidney enhances WNK1 and SLC12A3 expression in collaboration with CLOCK. Modulates hair follicle cycling. Represses the CLOCK-BMAL1 induced transcription of BHLHE40/DEC1. This is Period circadian protein homolog 1 from Rattus norvegicus (Rat).